Consider the following 227-residue polypeptide: Urease subunit gamma/beta (227 aa).

Positions 1 to 101 are urease gamma; that stretch reads MRLTPTERDR…LAVVADPVGG (101 aa). Residues 102–227 are urease beta; that stretch reads GGLGDDAPGA…AACGYLGADR (126 aa).

It in the N-terminal section; belongs to the urease gamma subunit family. In the C-terminal section; belongs to the urease beta subunit family. Heterohexamer of 3 UreC (alpha) and 3 UreAB (gamma/beta) subunits.

The protein localises to the cytoplasm. The catalysed reaction is urea + 2 H2O + H(+) = hydrogencarbonate + 2 NH4(+). It participates in nitrogen metabolism; urea degradation; CO(2) and NH(3) from urea (urease route): step 1/1. In Streptomyces coelicolor (strain ATCC BAA-471 / A3(2) / M145), this protein is Urease subunit gamma/beta.